We begin with the raw amino-acid sequence, 192 residues long: Type 1 phosphatases regulator YPI2 (192 aa).

Disordered regions lie at residues 1 to 53 (MLQR…GKHK) and 65 to 192 (EFGQ…PVQK). The span at 8–18 (QTSSSTQTETT) shows a compositional bias: low complexity. Basic and acidic residues predominate over residues 25–49 (RRPETRQKEDSKVKWTEDVIDNEHM). Positions 69–79 (SSDESSDSSSD) are enriched in low complexity. Positions 86 to 103 (YERNNDFDQNHRHSHNFD) are enriched in basic and acidic residues. Over residues 134 to 148 (KGNTGMSKPSSSSPD) the composition is skewed to polar residues. Residues 157 to 169 (IHKRNKKVRKPKR) show a composition bias toward basic residues.

It belongs to the YPI1 family.

It is found in the nucleus. Regulator of type 1 phosphatases which maintains protein phosphatase activity under strict control. This is Type 1 phosphatases regulator YPI2 (YPI2) from Scheffersomyces stipitis (strain ATCC 58785 / CBS 6054 / NBRC 10063 / NRRL Y-11545) (Yeast).